The following is a 388-amino-acid chain: 8-amino-7-oxononanoate synthase (388 aa).

Residue Arg-20 coordinates substrate. 107–108 (GY) contacts pyridoxal 5'-phosphate. His-132 is a binding site for substrate. Pyridoxal 5'-phosphate is bound by residues Ser-178, His-206, and Thr-237. At Lys-240 the chain carries N6-(pyridoxal phosphate)lysine. Substrate is bound at residue Thr-356.

It belongs to the class-II pyridoxal-phosphate-dependent aminotransferase family. BioF subfamily. In terms of assembly, homodimer. It depends on pyridoxal 5'-phosphate as a cofactor.

The enzyme catalyses 6-carboxyhexanoyl-[ACP] + L-alanine + H(+) = (8S)-8-amino-7-oxononanoate + holo-[ACP] + CO2. It functions in the pathway cofactor biosynthesis; biotin biosynthesis. Catalyzes the decarboxylative condensation of pimeloyl-[acyl-carrier protein] and L-alanine to produce 8-amino-7-oxononanoate (AON), [acyl-carrier protein], and carbon dioxide. The protein is 8-amino-7-oxononanoate synthase of Herminiimonas arsenicoxydans.